We begin with the raw amino-acid sequence, 405 residues long: Tryptophan synthase beta chain (405 aa).

K98 carries the post-translational modification N6-(pyridoxal phosphate)lysine.

This sequence belongs to the TrpB family. In terms of assembly, tetramer of two alpha and two beta chains. It depends on pyridoxal 5'-phosphate as a cofactor.

It catalyses the reaction (1S,2R)-1-C-(indol-3-yl)glycerol 3-phosphate + L-serine = D-glyceraldehyde 3-phosphate + L-tryptophan + H2O. Its pathway is amino-acid biosynthesis; L-tryptophan biosynthesis; L-tryptophan from chorismate: step 5/5. Functionally, the beta subunit is responsible for the synthesis of L-tryptophan from indole and L-serine. In Stenotrophomonas maltophilia (strain K279a), this protein is Tryptophan synthase beta chain.